Here is a 60-residue protein sequence, read N- to C-terminus: Cytotoxin 7 (60 aa).

4 cysteine pairs are disulfide-bonded: C3-C21, C14-C38, C42-C53, and C54-C59.

The protein belongs to the three-finger toxin family. Short-chain subfamily. Type IA cytotoxin sub-subfamily. As to quaternary structure, monomer in solution; Homodimer and oligomer in the presence of negatively charged lipids forming a pore with a size ranging between 20 and 30 Angstroms. As to expression, expressed by the venom gland.

It localises to the secreted. Its subcellular location is the target cell membrane. Shows cytolytic activity on many different cells by forming pore in lipid membranes. In vivo, increases heart rate or kills the animal by cardiac arrest. In addition, it binds to heparin with high affinity, interacts with Kv channel-interacting protein 1 (KCNIP1) in a calcium-independent manner, and binds to integrin alpha-V/beta-3 (ITGAV/ITGB3) with moderate affinity. Preferentially binds acidic phospholipids like phosphatidylserine, phosphatidic acid and phosphatidyl glycerol. Has hemolytic activity towards human erythrocytes (EC(50)=0.171 uM) and cytolytic activity towards various cell lines. The polypeptide is Cytotoxin 7 (Naja naja (Indian cobra)).